Reading from the N-terminus, the 294-residue chain is Casein kinase II subunit beta (294 aa).

2 disordered regions span residues Asp66–Asn90 and Lys269–Glu294. Positions Asp70–Ser87 are enriched in low complexity. Residues Glu273–Asp288 are compositionally biased toward acidic residues.

It belongs to the casein kinase 2 subunit beta family. Tetramer composed of two alpha chains, one beta chain and one beta' chain. Post-translationally, phosphorylated by alpha subunit.

Functionally, regulatory subunit of casein kinase II/CK2. As part of the kinase complex regulates the basal catalytic activity of the alpha subunit a constitutively active serine/threonine-protein kinase that phosphorylates a large number of substrates containing acidic residues C-terminal to the phosphorylated serine or threonine. The sequence is that of Casein kinase II subunit beta (CKB1) from Candida albicans (Yeast).